The following is a 262-amino-acid chain: Cytochrome c oxidase subunit 3 (262 aa).

7 helical membrane-spanning segments follow: residues 13–33 (PWPL…VMYM), 38–58 (GGGL…YVWW), 82–102 (GMLL…WAFF), 134–154 (TIIL…ILAG), 159–179 (GIIS…FQAL), 200–220 (ATGF…VCLF), and 237–257 (AAAW…VCIY).

It belongs to the cytochrome c oxidase subunit 3 family. In terms of assembly, component of the cytochrome c oxidase (complex IV, CIV), a multisubunit enzyme composed of a catalytic core of 3 subunits and several supernumerary subunits. The complex exists as a monomer or a dimer and forms supercomplexes (SCs) in the inner mitochondrial membrane with ubiquinol-cytochrome c oxidoreductase (cytochrome b-c1 complex, complex III, CIII).

It is found in the mitochondrion inner membrane. It carries out the reaction 4 Fe(II)-[cytochrome c] + O2 + 8 H(+)(in) = 4 Fe(III)-[cytochrome c] + 2 H2O + 4 H(+)(out). Functionally, component of the cytochrome c oxidase, the last enzyme in the mitochondrial electron transport chain which drives oxidative phosphorylation. The respiratory chain contains 3 multisubunit complexes succinate dehydrogenase (complex II, CII), ubiquinol-cytochrome c oxidoreductase (cytochrome b-c1 complex, complex III, CIII) and cytochrome c oxidase (complex IV, CIV), that cooperate to transfer electrons derived from NADH and succinate to molecular oxygen, creating an electrochemical gradient over the inner membrane that drives transmembrane transport and the ATP synthase. Cytochrome c oxidase is the component of the respiratory chain that catalyzes the reduction of oxygen to water. Electrons originating from reduced cytochrome c in the intermembrane space (IMS) are transferred via the dinuclear copper A center (CU(A)) of subunit 2 and heme A of subunit 1 to the active site in subunit 1, a binuclear center (BNC) formed by heme A3 and copper B (CU(B)). The BNC reduces molecular oxygen to 2 water molecules using 4 electrons from cytochrome c in the IMS and 4 protons from the mitochondrial matrix. This Prototheca wickerhamii protein is Cytochrome c oxidase subunit 3 (COX3).